The chain runs to 212 residues: Protein-L-isoaspartate O-methyltransferase (212 aa).

The active site involves Ser-60.

This sequence belongs to the methyltransferase superfamily. L-isoaspartyl/D-aspartyl protein methyltransferase family.

The protein localises to the cytoplasm. The catalysed reaction is [protein]-L-isoaspartate + S-adenosyl-L-methionine = [protein]-L-isoaspartate alpha-methyl ester + S-adenosyl-L-homocysteine. In terms of biological role, catalyzes the methyl esterification of L-isoaspartyl residues in peptides and proteins that result from spontaneous decomposition of normal L-aspartyl and L-asparaginyl residues. It plays a role in the repair and/or degradation of damaged proteins. The chain is Protein-L-isoaspartate O-methyltransferase from Methanococcus maripaludis (strain DSM 14266 / JCM 13030 / NBRC 101832 / S2 / LL).